We begin with the raw amino-acid sequence, 113 residues long: UPF0251 protein TK0562 (113 aa).

Belongs to the UPF0251 family.

In Thermococcus kodakarensis (strain ATCC BAA-918 / JCM 12380 / KOD1) (Pyrococcus kodakaraensis (strain KOD1)), this protein is UPF0251 protein TK0562.